We begin with the raw amino-acid sequence, 92 residues long: DNA-directed RNA polymerase subunit Rpo11 (92 aa).

The protein belongs to the archaeal Rpo11/eukaryotic RPB11/RPC19 RNA polymerase subunit family. As to quaternary structure, part of the RNA polymerase complex.

The protein localises to the cytoplasm. It carries out the reaction RNA(n) + a ribonucleoside 5'-triphosphate = RNA(n+1) + diphosphate. Its function is as follows. DNA-dependent RNA polymerase (RNAP) catalyzes the transcription of DNA into RNA using the four ribonucleoside triphosphates as substrates. This is DNA-directed RNA polymerase subunit Rpo11 from Methanosarcina mazei (strain ATCC BAA-159 / DSM 3647 / Goe1 / Go1 / JCM 11833 / OCM 88) (Methanosarcina frisia).